The chain runs to 541 residues: Chaperonin GroEL 2 (541 aa).

ATP-binding positions include 29-32 (TLGP), 86-90 (DGTTT), Gly413, 478-480 (NAA), and Asp494.

Belongs to the chaperonin (HSP60) family. In terms of assembly, forms a cylinder of 14 subunits composed of two heptameric rings stacked back-to-back. Interacts with the co-chaperonin GroES.

The protein localises to the cytoplasm. It catalyses the reaction ATP + H2O + a folded polypeptide = ADP + phosphate + an unfolded polypeptide.. Its function is as follows. Together with its co-chaperonin GroES, plays an essential role in assisting protein folding. The GroEL-GroES system forms a nano-cage that allows encapsulation of the non-native substrate proteins and provides a physical environment optimized to promote and accelerate protein folding. In Corynebacterium jeikeium (strain K411), this protein is Chaperonin GroEL 2.